The primary structure comprises 160 residues: Thy-1 membrane glycoprotein (160 aa).

The first 19 residues, 1 to 19 (MNPTVSIAVILTVLQAAHC), serve as a signal peptide directing secretion. Pyrrolidone carboxylic acid is present on Gln20. The region spanning 20–120 (QMIRDLSACL…YTGNQIKNIT (101 aa)) is the Ig-like V-type domain. 2 cysteine pairs are disulfide-bonded: Cys28–Cys129 and Cys38–Cys103. Asn42, Asn78, and Asn118 each carry an N-linked (GlcNAc...) asparagine glycan. Cys129 carries the GPI-anchor amidated cysteine lipid modification. Positions 130-160 (VRLSLLIQNTSWLLLLLLSLPLLQAVDFVSL) are cleaved as a propeptide — removed in mature form. N-linked (GlcNAc...) asparagine glycosylation occurs at Asn138.

The N-terminus is blocked. As to expression, forebrain, cerebellum and tectum.

The protein localises to the cell membrane. In terms of biological role, may play a role in cell-cell or cell-ligand interactions during synaptogenesis and other events in the brain. This is Thy-1 membrane glycoprotein (THY1) from Gallus gallus (Chicken).